The chain runs to 431 residues: Histidinol dehydrogenase (431 aa).

3 residues coordinate NAD(+): tyrosine 127, glutamine 185, and asparagine 208. Serine 234, glutamine 256, and histidine 259 together coordinate substrate. Zn(2+)-binding residues include glutamine 256 and histidine 259. Catalysis depends on proton acceptor residues glutamate 323 and histidine 324. Positions 324, 357, 411, and 416 each coordinate substrate. Position 357 (aspartate 357) interacts with Zn(2+). Zn(2+) is bound at residue histidine 416.

Belongs to the histidinol dehydrogenase family. Zn(2+) serves as cofactor.

The enzyme catalyses L-histidinol + 2 NAD(+) + H2O = L-histidine + 2 NADH + 3 H(+). Its pathway is amino-acid biosynthesis; L-histidine biosynthesis; L-histidine from 5-phospho-alpha-D-ribose 1-diphosphate: step 9/9. Its function is as follows. Catalyzes the sequential NAD-dependent oxidations of L-histidinol to L-histidinaldehyde and then to L-histidine. This is Histidinol dehydrogenase from Vibrio vulnificus (strain YJ016).